Reading from the N-terminus, the 351-residue chain is MTTAVGRISDRGWFDVLDDWLKRDRFVFVGWSGLLLFPCAYMAIGGWLTGTTFATSWYTHGIASSYLEGCNFLTVAISTPADSMGHALLLLWGPEAQGAFVRWVQLGGLWTFTALHGAFALIGFMLRQFEIARLVGVRPYNAIAFSAPIALFVSVFLIYPLGQSSWFFAPSFGVAAIFRFILFFQGFHNWTLNPFHMMGVAGVLGGALLCAIHGATVENTLFEDGDDATTFRGFEPTQSEETYSMVTANRFWSQIFGIAFSNKRWLHFFMLFVPVMGLWMSAIGVVGLALNLRSYDFVSQEIRAAEDPEFETFYTKNILLNEGLRAWMAPQDQPHENFIFPEEVLPRGNAL.

The helical transmembrane segment at 39 to 59 threads the bilayer; sequence CAYMAIGGWLTGTTFATSWYT. His-116 is a chlorophyll a binding site. A helical transmembrane segment spans residues 123-139; sequence GFMLRQFEIARLVGVRP. 2 residues coordinate pheophytin a: Gln-128 and Asn-141. A helical membrane pass occupies residues 151 to 164; that stretch reads LFVSVFLIYPLGQS. Residue His-196 participates in chlorophyll a binding. A helical membrane pass occupies residues 206–226; sequence GALLCAIHGATVENTLFEDGD. A plastoquinone contacts are provided by His-213 and Phe-260. His-213 contributes to the Fe cation binding site. A Fe cation-binding site is contributed by His-267. A helical transmembrane segment spans residues 277 to 293; that stretch reads GLWMSAIGVVGLALNLR.

Belongs to the reaction center PufL/M/PsbA/D family. As to quaternary structure, PSII is composed of 1 copy each of membrane proteins PsbA, PsbB, PsbC, PsbD, PsbE, PsbF, PsbH, PsbI, PsbJ, PsbK, PsbL, PsbM, PsbT, PsbX, PsbY, PsbZ, Psb30/Ycf12, peripheral proteins PsbO, CyanoQ (PsbQ), PsbU, PsbV and a large number of cofactors. It forms dimeric complexes. Requires The D1/D2 heterodimer binds P680, chlorophylls that are the primary electron donor of PSII, and subsequent electron acceptors. It shares a non-heme iron and each subunit binds pheophytin, quinone, additional chlorophylls, carotenoids and lipids. There is also a Cl(-1) ion associated with D1 and D2, which is required for oxygen evolution. The PSII complex binds additional chlorophylls, carotenoids and specific lipids. as cofactor.

Its subcellular location is the cellular thylakoid membrane. The catalysed reaction is 2 a plastoquinone + 4 hnu + 2 H2O = 2 a plastoquinol + O2. Functionally, photosystem II (PSII) is a light-driven water:plastoquinone oxidoreductase that uses light energy to abstract electrons from H(2)O, generating O(2) and a proton gradient subsequently used for ATP formation. It consists of a core antenna complex that captures photons, and an electron transfer chain that converts photonic excitation into a charge separation. The D1/D2 (PsbA/PsbD) reaction center heterodimer binds P680, the primary electron donor of PSII as well as several subsequent electron acceptors. D2 is needed for assembly of a stable PSII complex. The protein is Photosystem II D2 protein of Prochlorothrix hollandica.